We begin with the raw amino-acid sequence, 95 residues long: Glutaredoxin 1 (95 aa).

Positions 1 to 95 (MNKSILHTII…DKLLEHQPKN (95 aa)) constitute a Glutaredoxin domain. A disulfide bridge connects residues C17 and C20.

Belongs to the glutaredoxin family. In terms of assembly, monomer.

It is found in the cytoplasm. Has a glutathione-disulfide oxidoreductase activity in the presence of NADPH and glutathione reductase. Reduces low molecular weight disulfides and proteins. The sequence is that of Glutaredoxin 1 (grxC1) from Rickettsia prowazekii (strain Madrid E).